Reading from the N-terminus, the 214-residue chain is Cell division protein B1 (214 aa).

Part of a cell division machinery. The chain is Cell division protein B1 from Sulfolobus acidocaldarius (strain ATCC 33909 / DSM 639 / JCM 8929 / NBRC 15157 / NCIMB 11770).